A 95-amino-acid polypeptide reads, in one-letter code: Aspartyl/glutamyl-tRNA(Asn/Gln) amidotransferase subunit C (95 aa).

This sequence belongs to the GatC family. As to quaternary structure, heterotrimer of A, B and C subunits.

It catalyses the reaction L-glutamyl-tRNA(Gln) + L-glutamine + ATP + H2O = L-glutaminyl-tRNA(Gln) + L-glutamate + ADP + phosphate + H(+). It carries out the reaction L-aspartyl-tRNA(Asn) + L-glutamine + ATP + H2O = L-asparaginyl-tRNA(Asn) + L-glutamate + ADP + phosphate + 2 H(+). Allows the formation of correctly charged Asn-tRNA(Asn) or Gln-tRNA(Gln) through the transamidation of misacylated Asp-tRNA(Asn) or Glu-tRNA(Gln) in organisms which lack either or both of asparaginyl-tRNA or glutaminyl-tRNA synthetases. The reaction takes place in the presence of glutamine and ATP through an activated phospho-Asp-tRNA(Asn) or phospho-Glu-tRNA(Gln). This chain is Aspartyl/glutamyl-tRNA(Asn/Gln) amidotransferase subunit C, found in Thioalkalivibrio sulfidiphilus (strain HL-EbGR7).